Reading from the N-terminus, the 414-residue chain is Histidine--tRNA ligase (414 aa).

Belongs to the class-II aminoacyl-tRNA synthetase family. As to quaternary structure, homodimer.

The protein resides in the cytoplasm. The enzyme catalyses tRNA(His) + L-histidine + ATP = L-histidyl-tRNA(His) + AMP + diphosphate + H(+). This Rickettsia conorii (strain ATCC VR-613 / Malish 7) protein is Histidine--tRNA ligase.